The following is a 434-amino-acid chain: MPIITDVYAREVLDSRGNPTIEVEVFTESGALGRALVPSGASTGEHEAVELRDGDKDRYMGKGVLKAVENVNEIIAPEIIEGDFSVLDQVSIDKMMIALDGTDNKGKLGANAILGVSIAVARAAADYLGVPLYKYLGGFNGTELPVPMMNIVNGGSHSDAPIAFQEFMVLPVGAPNFKEALRWGAEIFHNLAKILKGRNLSTAVGDEGGFAPTFEGTEDAVETILEAIKAAGLEPGKDVFLGFDCAASEFFENGVYDYAKFEGENGKKRTSSEQVDYLEELVDKYPIITIEDGMDENDWEGWKALTDRLGNKVQLVGDDLFVTNTKILERGINEGVGNSILIKVNQIGTLTETFEAIEMAQKAGYTAVVSHRSGETEDTTIADIAVATNAGQIKTGSLSRTDRIAKYNQLLRIEDELFETAKFKGLNAFYNLNK.

(2R)-2-phosphoglycerate is bound at residue Gln165. Glu207 (proton donor) is an active-site residue. Residues Asp244, Glu291, and Asp318 each coordinate Mg(2+). Residues Lys343, Arg372, Ser373, and Lys394 each contribute to the (2R)-2-phosphoglycerate site. Catalysis depends on Lys343, which acts as the Proton acceptor.

It belongs to the enolase family. Mg(2+) serves as cofactor.

It localises to the cytoplasm. It is found in the secreted. Its subcellular location is the cell surface. The catalysed reaction is (2R)-2-phosphoglycerate = phosphoenolpyruvate + H2O. It participates in carbohydrate degradation; glycolysis; pyruvate from D-glyceraldehyde 3-phosphate: step 4/5. In terms of biological role, catalyzes the reversible conversion of 2-phosphoglycerate (2-PG) into phosphoenolpyruvate (PEP). It is essential for the degradation of carbohydrates via glycolysis. This chain is Enolase, found in Macrococcus caseolyticus (strain JCSC5402) (Macrococcoides caseolyticum).